Consider the following 362-residue polypeptide: Alpha-glucoside transport ATP-binding protein AglK (362 aa).

The 232-residue stretch at 4–235 (LLLKDIRKSY…PANLFVARFI (232 aa)) folds into the ABC transporter domain. Position 36-43 (36-43 (GPSGCGKS)) interacts with ATP.

Belongs to the ABC transporter superfamily.

It localises to the cell inner membrane. In terms of biological role, part of the binding-protein-dependent transport system for alpha-glucosides such as sucrose, maltose and trehalose. Probably responsible for energy coupling to the transport system. This chain is Alpha-glucoside transport ATP-binding protein AglK (aglK), found in Rhizobium meliloti (strain 1021) (Ensifer meliloti).